The sequence spans 126 residues: Aspartate 1-decarboxylase (126 aa).

Ser-25 (schiff-base intermediate with substrate; via pyruvic acid) is an active-site residue. Ser-25 is subject to Pyruvic acid (Ser). Thr-57 is a substrate binding site. Tyr-58 functions as the Proton donor in the catalytic mechanism. 72–74 (GAT) contributes to the substrate binding site.

This sequence belongs to the PanD family. As to quaternary structure, heterooctamer of four alpha and four beta subunits. Pyruvate serves as cofactor. In terms of processing, is synthesized initially as an inactive proenzyme, which is activated by self-cleavage at a specific serine bond to produce a beta-subunit with a hydroxyl group at its C-terminus and an alpha-subunit with a pyruvoyl group at its N-terminus.

Its subcellular location is the cytoplasm. It catalyses the reaction L-aspartate + H(+) = beta-alanine + CO2. It participates in cofactor biosynthesis; (R)-pantothenate biosynthesis; beta-alanine from L-aspartate: step 1/1. Functionally, catalyzes the pyruvoyl-dependent decarboxylation of aspartate to produce beta-alanine. This Campylobacter jejuni subsp. doylei (strain ATCC BAA-1458 / RM4099 / 269.97) protein is Aspartate 1-decarboxylase.